A 260-amino-acid polypeptide reads, in one-letter code: Indole-3-glycerol phosphate synthase (260 aa).

The protein belongs to the TrpC family.

The catalysed reaction is 1-(2-carboxyphenylamino)-1-deoxy-D-ribulose 5-phosphate + H(+) = (1S,2R)-1-C-(indol-3-yl)glycerol 3-phosphate + CO2 + H2O. It functions in the pathway amino-acid biosynthesis; L-tryptophan biosynthesis; L-tryptophan from chorismate: step 4/5. This Staphylococcus aureus (strain Mu3 / ATCC 700698) protein is Indole-3-glycerol phosphate synthase.